The following is a 128-amino-acid chain: Transcription antitermination protein NusB (128 aa).

Belongs to the NusB family.

Involved in transcription antitermination. Required for transcription of ribosomal RNA (rRNA) genes. Binds specifically to the boxA antiterminator sequence of the ribosomal RNA (rrn) operons. The chain is Transcription antitermination protein NusB from Listeria innocua serovar 6a (strain ATCC BAA-680 / CLIP 11262).